Reading from the N-terminus, the 186-residue chain is ATP synthase subunit delta (186 aa).

The protein belongs to the ATPase delta chain family. In terms of assembly, F-type ATPases have 2 components, F(1) - the catalytic core - and F(0) - the membrane proton channel. F(1) has five subunits: alpha(3), beta(3), gamma(1), delta(1), epsilon(1). F(0) has three main subunits: a(1), b(2) and c(10-14). The alpha and beta chains form an alternating ring which encloses part of the gamma chain. F(1) is attached to F(0) by a central stalk formed by the gamma and epsilon chains, while a peripheral stalk is formed by the delta and b chains.

The protein localises to the cell inner membrane. Its function is as follows. F(1)F(0) ATP synthase produces ATP from ADP in the presence of a proton or sodium gradient. F-type ATPases consist of two structural domains, F(1) containing the extramembraneous catalytic core and F(0) containing the membrane proton channel, linked together by a central stalk and a peripheral stalk. During catalysis, ATP synthesis in the catalytic domain of F(1) is coupled via a rotary mechanism of the central stalk subunits to proton translocation. In terms of biological role, this protein is part of the stalk that links CF(0) to CF(1). It either transmits conformational changes from CF(0) to CF(1) or is implicated in proton conduction. The protein is ATP synthase subunit delta of Fuscovulum blasticum (Rhodobacter blasticus).